The chain runs to 146 residues: Large ribosomal subunit protein uL15 (146 aa).

Residues 1 to 13 (MKLHELHSAEGSR) show a composition bias toward basic and acidic residues. Positions 1–55 (MKLHELHSAEGSRRNRKRVGRGTSSGYGKTSGRGQKGQLARQGGHTRLGFEGGQM) are disordered. Residues 23–35 (TSSGYGKTSGRGQ) are compositionally biased toward gly residues.

The protein belongs to the universal ribosomal protein uL15 family. In terms of assembly, part of the 50S ribosomal subunit.

In terms of biological role, binds to the 23S rRNA. The polypeptide is Large ribosomal subunit protein uL15 (Lactobacillus helveticus (strain DPC 4571)).